The primary structure comprises 157 residues: Small ribosomal subunit protein uS7cz/uS7cy (157 aa).

This sequence belongs to the universal ribosomal protein uS7 family. In terms of assembly, part of the 30S ribosomal subunit.

It is found in the plastid. The protein localises to the chloroplast. Its function is as follows. One of the primary rRNA binding proteins, it binds directly to 16S rRNA where it nucleates assembly of the head domain of the 30S subunit. The sequence is that of Small ribosomal subunit protein uS7cz/uS7cy (rps7-A) from Welwitschia mirabilis (Tree tumbo).